Consider the following 441-residue polypeptide: Trigger factor (441 aa).

The region spanning 175–257 is the PPIase FKBP-type domain; sequence GDFISLSLHV…VNAVIEVVAP (83 aa).

It belongs to the FKBP-type PPIase family. Tig subfamily.

It localises to the cytoplasm. The enzyme catalyses [protein]-peptidylproline (omega=180) = [protein]-peptidylproline (omega=0). Functionally, involved in protein export. Acts as a chaperone by maintaining the newly synthesized protein in an open conformation. Functions as a peptidyl-prolyl cis-trans isomerase. The polypeptide is Trigger factor (Chlamydia abortus (strain DSM 27085 / S26/3) (Chlamydophila abortus)).